Here is a 497-residue protein sequence, read N- to C-terminus: Cobyrinate a,c-diamide synthase (497 aa).

In terms of domain architecture, GATase cobBQ-type spans 273–478 (RIGIALDEAF…AHLHGVAYRE (206 aa)). Cys-355 (nucleophile) is an active-site residue.

The protein belongs to the CobB/CbiA family. Requires Mg(2+) as cofactor.

It carries out the reaction cob(II)yrinate + 2 L-glutamine + 2 ATP + 2 H2O = cob(II)yrinate a,c diamide + 2 L-glutamate + 2 ADP + 2 phosphate + 2 H(+). The catalysed reaction is Ni-sirohydrochlorin + 2 L-glutamine + 2 ATP + 2 H2O = Ni-sirohydrochlorin a,c-diamide + 2 L-glutamate + 2 ADP + 2 phosphate + 2 H(+). The protein operates within cofactor biosynthesis; adenosylcobalamin biosynthesis; cob(II)yrinate a,c-diamide from sirohydrochlorin (anaerobic route): step 10/10. Functionally, catalyzes the ATP-dependent amidation of the two carboxylate groups at positions a and c of cobyrinate, using either L-glutamine or ammonia as the nitrogen source (Potential). Involved in the biosynthesis of the unique nickel-containing tetrapyrrole coenzyme F430, the prosthetic group of methyl-coenzyme M reductase (MCR), which plays a key role in methanogenesis and anaerobic methane oxidation. Catalyzes the ATP-dependent amidation of the two carboxylate groups at positions a and c of Ni-sirohydrochlorin, using L-glutamine or ammonia as the nitrogen source. This chain is Cobyrinate a,c-diamide synthase, found in Methanosarcina acetivorans (strain ATCC 35395 / DSM 2834 / JCM 12185 / C2A).